Reading from the N-terminus, the 304-residue chain is UDP-3-O-acyl-N-acetylglucosamine deacetylase (304 aa).

Histidine 79, histidine 238, and aspartate 242 together coordinate Zn(2+). Residue histidine 265 is the Proton donor of the active site.

Belongs to the LpxC family. Requires Zn(2+) as cofactor.

It carries out the reaction a UDP-3-O-[(3R)-3-hydroxyacyl]-N-acetyl-alpha-D-glucosamine + H2O = a UDP-3-O-[(3R)-3-hydroxyacyl]-alpha-D-glucosamine + acetate. It participates in glycolipid biosynthesis; lipid IV(A) biosynthesis; lipid IV(A) from (3R)-3-hydroxytetradecanoyl-[acyl-carrier-protein] and UDP-N-acetyl-alpha-D-glucosamine: step 2/6. Its function is as follows. Catalyzes the hydrolysis of UDP-3-O-myristoyl-N-acetylglucosamine to form UDP-3-O-myristoylglucosamine and acetate, the committed step in lipid A biosynthesis. The chain is UDP-3-O-acyl-N-acetylglucosamine deacetylase from Pseudoalteromonas atlantica (strain T6c / ATCC BAA-1087).